Reading from the N-terminus, the 513-residue chain is Solute carrier family 2, facilitated glucose transporter member 7 (513 aa).

The Cytoplasmic portion of the chain corresponds to 1–21 (MEDKEIGTPLPLPHSEARLQP). The chain crosses the membrane as a helical span at residues 22–42 (TLVLTTLSAAFGSVFQYGYNI). Topologically, residues 43–78 (AVINTPHKVFKSFYNDTHFERHGTFMDESTLLLLWS) are extracellular. Residue Asn-57 is glycosylated (N-linked (GlcNAc...) asparagine). Residues 79–99 (CTVSMFPLGGLLGSLVVGLMV) form a helical membrane-spanning segment. The Cytoplasmic portion of the chain corresponds to 100–107 (NKWGRKGT). Residues 108 to 128 (LLINNVFAITSAVLMGVSKVA) traverse the membrane as a helical segment. At 129-138 (RAFELIILSR) the chain is on the extracellular side. Residues 139–159 (VLVGICAGIAYSTLPMYLGEL) traverse the membrane as a helical segment. Residues 160–172 (APQNLRGALGTMT) lie on the Cytoplasmic side of the membrane. The chain crosses the membrane as a helical span at residues 173–193 (EVFVIIGVLLAQIFSLQAILG). Residues 194 to 198 (NATGW) are Extracellular-facing. Residues 199 to 219 (PILLALTGVPAVIQLLSLPFF) form a helical membrane-spanning segment. At 220-282 (PESPRYTLIE…LNLFTFRPLR (63 aa)) the chain is on the cytoplasmic side. A helical membrane pass occupies residues 283-303 (WQLISIVVLMAGQQLSGINAV). D-glucose contacts are provided by residues 295–296 (QQ) and Asn-301. Residues 304–322 (NYYADVIYTSAGVDPTQSQ) lie on the Extracellular side of the membrane. Residues 323–343 (YVTLGSGVINLVMTLVSAVII) traverse the membrane as a helical segment. Asn-332 contacts D-glucose. The Cytoplasmic portion of the chain corresponds to 344 to 351 (ERLGRRIL). A helical transmembrane segment spans residues 352–372 (LLSGYAICCSACLVLTVALLL). The Extracellular portion of the chain corresponds to 373-380 (QSTAPELS). A helical membrane pass occupies residues 381 to 401 (YLSIVCVFSYIVGHSIGPSPV). Residues 402–416 (PSVVRTEIVLQSSRT) are Cytoplasmic-facing. The chain crosses the membrane as a helical span at residues 417-437 (AAFTVDGAVHWLTNFIVGLTF). The Extracellular portion of the chain corresponds to 438–446 (PSIQVAIGA). A helical membrane pass occupies residues 447-467 (YSFLVFAGVCILTAAYIYVVI). Residues 468–513 (PETKGRTFVEINCAFAKRNGVEFPEEKEVATAKPHTPSLPTKETAF) are Cytoplasmic-facing. Residues 494 to 513 (KEVATAKPHTPSLPTKETAF) form a disordered region.

This sequence belongs to the major facilitator superfamily. Sugar transporter (TC 2.A.1.1) family. Glucose transporter subfamily.

The protein resides in the cell membrane. It is found in the apical cell membrane. The catalysed reaction is D-glucose(out) = D-glucose(in). It catalyses the reaction D-fructose(out) = D-fructose(in). In terms of biological role, probable sugar transporter. Even if its physiological substrate is subject to discussion, it is able to transport glucose and fructose. Does not transport galactose, 2-deoxy-d-glucose and xylose. The sequence is that of Solute carrier family 2, facilitated glucose transporter member 7 from Mus musculus (Mouse).